The following is a 158-amino-acid chain: Capsid protein (158 aa).

N-acetylserine; by host is present on serine 2.

The protein belongs to the virgaviridae capsid protein family.

Its subcellular location is the virion. Its function is as follows. Capsid protein self-assembles to form rod-shaped virions about 18 nm in diameter with a central canal enclosing the viral genomic RNA. In Odontoglossum ringspot virus (isolate Japan) (ORSV), this protein is Capsid protein (CP).